We begin with the raw amino-acid sequence, 114 residues long: Ribosome-binding factor A (114 aa).

The protein belongs to the RbfA family. Monomer. Binds 30S ribosomal subunits, but not 50S ribosomal subunits or 70S ribosomes.

It localises to the cytoplasm. Its function is as follows. One of several proteins that assist in the late maturation steps of the functional core of the 30S ribosomal subunit. Associates with free 30S ribosomal subunits (but not with 30S subunits that are part of 70S ribosomes or polysomes). Required for efficient processing of 16S rRNA. May interact with the 5'-terminal helix region of 16S rRNA. The sequence is that of Ribosome-binding factor A from Phytoplasma mali (strain AT).